An 855-amino-acid chain; its full sequence is Pre-mRNA-splicing factor SYF1 (855 aa).

HAT repeat units follow at residues 15–47 (LVFEEEDLPYEEEIMRNQFSVKCWLRYIEFKQG), 48–80 (APKPRLNQLYERALKLLPCSYKLWYRYLKARRA), 90–122 (PAYEDVNNCHERAFVFMHKMPRLWLDYCQFLMD), 124–158 (GRVTHTRRTFDRALRALPITQHSRIWPLYLRFLRS), 160–192 (PLPETAVRGYRRFLKLSPESAEEYIEYLKSSDR), 198–230 (QRLATVVNDERFVSKAGKSNYQLWHELCDLISQ), 235–268 (VQSLNVDAIIRGGLTRFTDQLGKLWCSLADYYIR), 270–305 (GHFEKARDVYEEAIRTVMTVRDFTQVFDSYAQFEES), and 369–407 (GRPREIINTYTEAVQTVDPFKATGKPHTLWVAFAKFYED). Lysine 420 is modified (N6-acetyllysine). HAT repeat units follow at residues 498 to 530 (GTFQSTKAVYDRILDLRIATPQIVINYAMFLEE), 532 to 566 (KYFEESFKAYERGISLFKWPNVSDIWSTYLTKFIA), 571 to 605 (RKLERARDLFEQALDGCPPKYAKTLYLLYAQLEEE), 643 to 677 (YGVTHTRGIYQKAIEVLSDEHAREMCLRFADMECK), and 679 to 713 (GEIDRARAIYSFCSQICDPRTTGAFWQTWKDFEVR). The disordered stretch occupies residues 810-855 (LAQQVNPEEIQLGEDEDEDEMDLEPNEVRLEQQSVPAAVFGSLKED). Residues 820–834 (QLGEDEDEDEMDLEP) show a composition bias toward acidic residues. Serine 851 carries the post-translational modification Phosphoserine.

Belongs to the crooked-neck family. Associates with RNA polymerase II, the TCR-specific proteins CKN1/CSA and ERCC6/CSB, and XPA. Identified in the spliceosome C complex. Component of the XAB2 complex, a multimeric protein complex composed of XAB2, PRPF19, AQR, ZNF830, ISY1, and PPIE. Identified in a pentameric intron-binding (IB) complex composed of AQR, XAB2, ISY1, ZNF830 and PPIE that is incorporated into the spliceosome as a preassembled complex. The IB complex does not contain PRPF19.

Its subcellular location is the nucleus. Involved in pre-mRNA splicing as component of the spliceosome. Involved in transcription-coupled repair (TCR), transcription and pre-mRNA splicing. In Homo sapiens (Human), this protein is Pre-mRNA-splicing factor SYF1 (XAB2).